Reading from the N-terminus, the 391-residue chain is Multidrug resistance protein MdtL (391 aa).

The Cytoplasmic segment spans residues 1 to 3; that stretch reads MSR. Residues 4 to 24 traverse the membrane as a helical segment; that stretch reads FLICSFALVLLYPAGIDMYLV. The Periplasmic portion of the chain corresponds to 25-41; that stretch reads GLPRIAADLNASEAQLH. Residues 42-62 form a helical membrane-spanning segment; sequence IAFSVYLAGMAAAMLFAGKVA. Over 63 to 68 the chain is Cytoplasmic; the sequence is DRSGRK. A helical membrane pass occupies residues 69–89; it reads PVAIPGAALFIIASVFCSLAE. Residues 90 to 92 are Periplasmic-facing; sequence TST. Residues 93–113 form a helical membrane-spanning segment; it reads LFLAGRFLQGLGAGCCYVVAF. At 114–130 the chain is on the cytoplasmic side; the sequence is AILRDTLDDRRRAKVLS. A helical membrane pass occupies residues 131-151; sequence LLNGITCIIPVLAPVLGHLIM. Topologically, residues 152-157 are periplasmic; the sequence is LKFPWQ. A helical membrane pass occupies residues 158-178; sequence SLFWTMAIMGIAVLMLSLFIL. Residues 179-198 are Cytoplasmic-facing; that stretch reads KETRPAAPAASDKSRENSES. The chain crosses the membrane as a helical span at residues 199–221; sequence LLNRFFLSRVVITTLSVSVILTF. Residues 222 to 244 lie on the Periplasmic side of the membrane; sequence VNTSPVLLMEIMGFERGEYATIM. A helical transmembrane segment spans residues 245-265; that stretch reads ALTAGVSMTVSFSTPFALGIF. At 266–268 the chain is on the cytoplasmic side; the sequence is KPR. The chain crosses the membrane as a helical span at residues 269–289; sequence TLMITSQVLFLAAGITLAVSP. Over 290-292 the chain is Periplasmic; that stretch reads SHA. A helical transmembrane segment spans residues 293 to 313; sequence ISLFGITLICAGFSVGFGVAM. Residues 314 to 330 lie on the Cytoplasmic side of the membrane; sequence SQALGPFSLRAGVASST. The helical transmembrane segment at 331 to 351 threads the bilayer; it reads LGIAQVCGSSLWIWLAAVVGI. Residues 352 to 355 lie on the Periplasmic side of the membrane; sequence GAWN. The chain crosses the membrane as a helical span at residues 356–376; it reads MLIGILIACSIVSLLLIMFVA. Over 377-391 the chain is Cytoplasmic; sequence PGRPVAAHEEIHHHA.

This sequence belongs to the major facilitator superfamily. DHA1 family. MdtL (TC 2.A.1.2.22) subfamily.

It localises to the cell inner membrane. The polypeptide is Multidrug resistance protein MdtL (Shigella dysenteriae serotype 1 (strain Sd197)).